Consider the following 401-residue polypeptide: F-box protein At1g69090 (401 aa).

Positions 1 to 23 (MASPTLALAQSPPPKSPAVSVSQ) are disordered. The 48-residue stretch at 27–74 (HCWSKLPLDLMQLVFERLAFLDFERAKSVCSSWQFGSKQSKPNNQIPW) folds into the F-box domain.

The polypeptide is F-box protein At1g69090 (Arabidopsis thaliana (Mouse-ear cress)).